Consider the following 286-residue polypeptide: tRNA (guanine-N(7)-)-methyltransferase (286 aa).

Residues Gly91, 114 to 115, 158 to 159, and Leu178 each bind S-adenosyl-L-methionine; these read EI and NS. Asp181 is a catalytic residue. Residue 256-258 participates in S-adenosyl-L-methionine binding; the sequence is TEE.

Belongs to the class I-like SAM-binding methyltransferase superfamily. TrmB family. In terms of assembly, forms a complex with TRM82.

The protein localises to the nucleus. The catalysed reaction is guanosine(46) in tRNA + S-adenosyl-L-methionine = N(7)-methylguanosine(46) in tRNA + S-adenosyl-L-homocysteine. The protein operates within tRNA modification; N(7)-methylguanine-tRNA biosynthesis. Functionally, catalyzes the formation of N(7)-methylguanine at position 46 (m7G46) in tRNA. This Cryptococcus neoformans var. neoformans serotype D (strain B-3501A) (Filobasidiella neoformans) protein is tRNA (guanine-N(7)-)-methyltransferase.